The primary structure comprises 725 residues: Putative coiled-coil domain-containing protein 144B (725 aa).

Residues 1–11 (MASWGGEKRGG) are compositionally biased toward basic and acidic residues. 5 disordered regions span residues 1–25 (MASW…ATRK), 87–188 (AARS…NLTE), 213–260 (LPEN…DCDR), 453–485 (NMNQ…DSDR), and 528–586 (EEEM…KVKN). 2 stretches are compositionally biased toward polar residues: residues 129–150 (PESL…LSDE) and 165–178 (PSVS…QSAT). Positions 215 to 244 (ENKESKEAEQDLELTSEEEQERLKGCENKQ) form a coiled coil. Over residues 224 to 234 (QDLELTSEEEQ) the composition is skewed to acidic residues. The segment covering 453 to 467 (NMNQNSDSGSTNNYK) has biased composition (polar residues). Residues 490–546 (YLHEELQQDMQKFKNEVNTLEEEFLALKKENVQLHKEVEEEMEKHRSNSTELSGTLT) are a coiled coil. Over residues 528–537 (EEEMEKHRSN) the composition is skewed to basic and acidic residues. The segment covering 543-552 (GTLTDGTTVG) has biased composition (low complexity). A compositionally biased stretch (basic and acidic residues) spans 563–583 (PRKENEEHDRPADKTANEKNK). Positions 648–713 (LLKLKNNHCD…ALKQENGRKE (66 aa)) form a coiled coil.

This sequence belongs to the CCDC144 family.

This Homo sapiens (Human) protein is Putative coiled-coil domain-containing protein 144B.